The following is a 229-amino-acid chain: Peptidase E (229 aa).

Catalysis depends on charge relay system residues Ser120, Asp135, and His157.

It belongs to the peptidase S51 family.

Its subcellular location is the cytoplasm. It carries out the reaction Dipeptidase E catalyzes the hydrolysis of dipeptides Asp-|-Xaa. It does not act on peptides with N-terminal Glu, Asn or Gln, nor does it cleave isoaspartyl peptides.. Hydrolyzes dipeptides containing N-terminal aspartate residues. May play a role in allowing the cell to use peptide aspartate to spare carbon otherwise required for the synthesis of the aspartate family of amino acids. In Salmonella paratyphi C (strain RKS4594), this protein is Peptidase E.